The chain runs to 837 residues: Protein translocase subunit SecA (837 aa).

ATP is bound by residues glutamine 85, glycine 103 to threonine 107, and aspartate 493. Residues cysteine 821, cysteine 823, cysteine 832, and histidine 833 each contribute to the Zn(2+) site.

This sequence belongs to the SecA family. Monomer and homodimer. Part of the essential Sec protein translocation apparatus which comprises SecA, SecYEG and auxiliary proteins SecDF. Other proteins may also be involved. It depends on Zn(2+) as a cofactor.

The protein resides in the cell membrane. It is found in the cytoplasm. The enzyme catalyses ATP + H2O + cellular proteinSide 1 = ADP + phosphate + cellular proteinSide 2.. In terms of biological role, part of the Sec protein translocase complex. Interacts with the SecYEG preprotein conducting channel. Has a central role in coupling the hydrolysis of ATP to the transfer of proteins into and across the cell membrane, serving as an ATP-driven molecular motor driving the stepwise translocation of polypeptide chains across the membrane. The protein is Protein translocase subunit SecA of Streptococcus pneumoniae serotype 19F (strain G54).